Here is a 487-residue protein sequence, read N- to C-terminus: 1,4-beta-D-glucan cellobiohydrolase CEL6A (487 aa).

The first 17 residues, 1-17 (MASKLFLAAALLQGALS), serve as a signal peptide directing secretion. One can recognise a CBM1 domain in the interval 27-63 (ACAAQWGQCGGQDYTGPTCCQSGSTCVVSNQWYSQCL). 2 disulfide bridges follow: cysteine 35/cysteine 52 and cysteine 46/cysteine 62. Residues 64 to 117 (PGSSNPTTTSRTSTSSSSSTSRTSSSTSRPPSSVPTTPTSVPPTITTTPTTTPT) show a composition bias toward low complexity. The tract at residues 64–127 (PGSSNPTTTS…GGSGPGTTAS (64 aa)) is disordered. 2 residues coordinate substrate: tryptophan 175 and aspartate 177. Aspartate 216 is an active-site residue. Aspartate 262 (proton donor) is an active-site residue. 6 residues coordinate substrate: histidine 307, tryptophan 310, asparagine 346, tryptophan 407, lysine 435, and glutamate 439. Residue aspartate 441 is the Proton acceptor of the active site.

The protein belongs to the glycosyl hydrolase 6 (cellulase B) family.

It is found in the secreted. It catalyses the reaction Hydrolysis of (1-&gt;4)-beta-D-glucosidic linkages in cellulose and cellotetraose, releasing cellobiose from the non-reducing ends of the chains.. In terms of biological role, exoglucanase that plays an important function in biomass degradation by catalyzing the hydrolysis of the non-reducing end beta-1,4-glucosidic linkages in cellulose and cellotetraose to release cellobiose. Shows higher hydrolytic activities on phosphoric acid-swollen cellulose (PSC), beta-glucan, and cellooligosaccharide derivatives than on cellulose, of which the best substrates were cellooligosaccharides. This is 1,4-beta-D-glucan cellobiohydrolase CEL6A from Pyricularia oryzae (strain 70-15 / ATCC MYA-4617 / FGSC 8958) (Rice blast fungus).